Consider the following 439-residue polypeptide: ATP-dependent protease ATPase subunit HslU (439 aa).

Residues isoleucine 17, 59–64, aspartate 251, glutamate 317, and arginine 389 each bind ATP; that span reads GVGKTE.

Belongs to the ClpX chaperone family. HslU subfamily. In terms of assembly, a double ring-shaped homohexamer of HslV is capped on each side by a ring-shaped HslU homohexamer. The assembly of the HslU/HslV complex is dependent on binding of ATP.

It is found in the cytoplasm. Functionally, ATPase subunit of a proteasome-like degradation complex; this subunit has chaperone activity. The binding of ATP and its subsequent hydrolysis by HslU are essential for unfolding of protein substrates subsequently hydrolyzed by HslV. HslU recognizes the N-terminal part of its protein substrates and unfolds these before they are guided to HslV for hydrolysis. This chain is ATP-dependent protease ATPase subunit HslU, found in Campylobacter jejuni subsp. jejuni serotype O:23/36 (strain 81-176).